The primary structure comprises 442 residues: Phosphoglucosamine mutase (442 aa).

Ser-98 serves as the catalytic Phosphoserine intermediate. Residues Ser-98, Asp-236, Asp-238, and Asp-240 each contribute to the Mg(2+) site. Phosphoserine is present on Ser-98.

It belongs to the phosphohexose mutase family. It depends on Mg(2+) as a cofactor. Post-translationally, activated by phosphorylation.

The enzyme catalyses alpha-D-glucosamine 1-phosphate = D-glucosamine 6-phosphate. Catalyzes the conversion of glucosamine-6-phosphate to glucosamine-1-phosphate. The polypeptide is Phosphoglucosamine mutase (Natranaerobius thermophilus (strain ATCC BAA-1301 / DSM 18059 / JW/NM-WN-LF)).